The sequence spans 150 residues: Large ribosomal subunit protein uL15 (150 aa).

The disordered stretch occupies residues 1–60 (MKLSDLRPNPGANKRRKRVGRGPGSGHGKTATRGHKGQKSRSGGLKDPRRFEGGRSTTLM). Over residues 30-39 (TATRGHKGQK) the composition is skewed to basic residues. Positions 44–53 (GLKDPRRFEG) are enriched in basic and acidic residues.

It belongs to the universal ribosomal protein uL15 family. As to quaternary structure, part of the 50S ribosomal subunit.

Functionally, binds to the 23S rRNA. This is Large ribosomal subunit protein uL15 from Thermus thermophilus (strain ATCC BAA-163 / DSM 7039 / HB27).